Reading from the N-terminus, the 148-residue chain is Lysozyme C (148 aa).

A signal peptide spans Met-1–Gly-18. The region spanning Lys-19–Val-148 is the C-type lysozyme domain. Disulfide bonds link Cys-24–Cys-146, Cys-48–Cys-134, Cys-83–Cys-99, and Cys-95–Cys-113. Active-site residues include Glu-53 and Asp-71.

This sequence belongs to the glycosyl hydrolase 22 family. In terms of assembly, monomer.

It localises to the secreted. It catalyses the reaction Hydrolysis of (1-&gt;4)-beta-linkages between N-acetylmuramic acid and N-acetyl-D-glucosamine residues in a peptidoglycan and between N-acetyl-D-glucosamine residues in chitodextrins.. In terms of biological role, lysozymes have primarily a bacteriolytic function; those in tissues and body fluids are associated with the monocyte-macrophage system and enhance the activity of immunoagents. The sequence is that of Lysozyme C (LYZ) from Leptonychotes weddellii (Weddell seal).